A 260-amino-acid polypeptide reads, in one-letter code: Type II methyltransferase M.CviBI (260 aa).

Residues Trp-7, Lys-11, Asp-54, and Asp-177 each contribute to the S-adenosyl-L-methionine site.

It belongs to the N(4)/N(6)-methyltransferase family.

It catalyses the reaction a 2'-deoxyadenosine in DNA + S-adenosyl-L-methionine = an N(6)-methyl-2'-deoxyadenosine in DNA + S-adenosyl-L-homocysteine + H(+). Functionally, a alpha subtype methylase, recognizes the double-stranded sequence 5'-GANTC-3', methylates A-2 on both strands, and protects the DNA from cleavage by the CviBI endonuclease. The protein is Type II methyltransferase M.CviBI of Paramecium bursaria Chlorella virus NC1A (PBCV-NC1A).